Here is a 211-residue protein sequence, read N- to C-terminus: tRNA (guanine-N(7)-)-methyltransferase (211 aa).

Glu44, Asp69, Asp96, and Asp118 together coordinate S-adenosyl-L-methionine. Residue Asp118 is part of the active site. Lys122 contributes to the substrate binding site. The interaction with RNA stretch occupies residues 124 to 129 (RHEKRR). Residues Asp154 and 191–194 (TEYE) each bind substrate.

It belongs to the class I-like SAM-binding methyltransferase superfamily. TrmB family.

The catalysed reaction is guanosine(46) in tRNA + S-adenosyl-L-methionine = N(7)-methylguanosine(46) in tRNA + S-adenosyl-L-homocysteine. It functions in the pathway tRNA modification; N(7)-methylguanine-tRNA biosynthesis. Its function is as follows. Catalyzes the formation of N(7)-methylguanine at position 46 (m7G46) in tRNA. The sequence is that of tRNA (guanine-N(7)-)-methyltransferase from Streptococcus pneumoniae (strain Taiwan19F-14).